We begin with the raw amino-acid sequence, 219 residues long: Peptide methionine sulfoxide reductase MsrA (219 aa).

The active site involves C58.

The protein belongs to the MsrA Met sulfoxide reductase family.

The catalysed reaction is L-methionyl-[protein] + [thioredoxin]-disulfide + H2O = L-methionyl-(S)-S-oxide-[protein] + [thioredoxin]-dithiol. It carries out the reaction [thioredoxin]-disulfide + L-methionine + H2O = L-methionine (S)-S-oxide + [thioredoxin]-dithiol. In terms of biological role, has an important function as a repair enzyme for proteins that have been inactivated by oxidation. Catalyzes the reversible oxidation-reduction of methionine sulfoxide in proteins to methionine. The polypeptide is Peptide methionine sulfoxide reductase MsrA (Ectopseudomonas mendocina (strain ymp) (Pseudomonas mendocina)).